The following is a 702-amino-acid chain: Glucoamylase (702 aa).

Residues 1–21 form the signal peptide; sequence MSRKLIKYLPLLVLASSVLSG. Cys-22 carries the N-palmitoyl cysteine lipid modification. The S-diacylglycerol cysteine moiety is linked to residue Cys-22. Trp-342 contributes to the substrate binding site. Catalysis depends on Glu-452, which acts as the Proton acceptor. The active-site Proton donor is Glu-455.

Belongs to the glycosyl hydrolase 15 family.

Its subcellular location is the cell membrane. It catalyses the reaction Hydrolysis of terminal (1-&gt;4)-linked alpha-D-glucose residues successively from non-reducing ends of the chains with release of beta-D-glucose.. CGA has typical kinetic properties for a glucoamylase, but this bacterial enzyme had higher isomaltose-hydrolyzing activity than other eukaryotic glucoamylases. The chain is Glucoamylase (cga) from Clostridium sp. (strain G0005).